Consider the following 86-residue polypeptide: Small ribosomal subunit protein uS15 (86 aa).

The protein belongs to the universal ribosomal protein uS15 family. As to quaternary structure, part of the 30S ribosomal subunit. Forms a bridge to the 50S subunit in the 70S ribosome, contacting the 23S rRNA.

One of the primary rRNA binding proteins, it binds directly to 16S rRNA where it helps nucleate assembly of the platform of the 30S subunit by binding and bridging several RNA helices of the 16S rRNA. Functionally, forms an intersubunit bridge (bridge B4) with the 23S rRNA of the 50S subunit in the ribosome. The chain is Small ribosomal subunit protein uS15 from Mycoplasma pneumoniae (strain ATCC 29342 / M129 / Subtype 1) (Mycoplasmoides pneumoniae).